A 351-amino-acid polypeptide reads, in one-letter code: Peptide chain release factor 1 (351 aa).

Q229 is subject to N5-methylglutamine.

The protein belongs to the prokaryotic/mitochondrial release factor family. Methylated by PrmC. Methylation increases the termination efficiency of RF1.

The protein localises to the cytoplasm. Peptide chain release factor 1 directs the termination of translation in response to the peptide chain termination codons UAG and UAA. The chain is Peptide chain release factor 1 from Cereibacter sphaeroides (strain ATCC 17029 / ATH 2.4.9) (Rhodobacter sphaeroides).